Consider the following 547-residue polypeptide: TBCC domain-containing protein 1 (547 aa).

The 132-residue stretch at 304–435 (PHTHRMVVMS…LEDHMAQTGL (132 aa)) folds into the C-CAP/cofactor C-like domain.

This sequence belongs to the TBCC family.

The protein resides in the cytoplasm. Its subcellular location is the cytoskeleton. The protein localises to the microtubule organizing center. It is found in the centrosome. It localises to the spindle pole. May play a role in the regulation of centrosome and Golgi apparatus positioning. The protein is TBCC domain-containing protein 1 (tbccd1) of Xenopus laevis (African clawed frog).